The primary structure comprises 201 residues: Retinol binding protein 4 (201 aa).

An N-terminal signal peptide occupies residues 1–18; the sequence is MAWVWALVLLAALGSARA. Cystine bridges form between C22-C178, C88-C192, and C138-C147. Q116 serves as a coordination point for substrate. R139 carries the omega-N-methylarginine modification.

This sequence belongs to the calycin superfamily. Lipocalin family. Interacts with TTR. Interaction with TTR prevents its loss by filtration through the kidney glomeruli. Interacts with STRA6. As to expression, highly expressed in liver. Also expressed in adipose tissue. Expressed by endometrium from days 16-25 and by unattached chorioallantois from days 30-36 during pregnancy.

Its subcellular location is the secreted. In terms of biological role, retinol-binding protein that mediates retinol transport in blood plasma. Delivers retinol from the liver stores to the peripheral tissues. Transfers the bound all-trans retinol to STRA6, that then facilitates retinol transport across the cell membrane. The polypeptide is Retinol binding protein 4 (Felis catus (Cat)).